The sequence spans 328 residues: Tetraacyldisaccharide 4'-kinase (328 aa).

ATP is bound at residue 55–62; it reads TAGGNGKT.

The protein belongs to the LpxK family.

The catalysed reaction is a lipid A disaccharide + ATP = a lipid IVA + ADP + H(+). It participates in glycolipid biosynthesis; lipid IV(A) biosynthesis; lipid IV(A) from (3R)-3-hydroxytetradecanoyl-[acyl-carrier-protein] and UDP-N-acetyl-alpha-D-glucosamine: step 6/6. Its function is as follows. Transfers the gamma-phosphate of ATP to the 4'-position of a tetraacyldisaccharide 1-phosphate intermediate (termed DS-1-P) to form tetraacyldisaccharide 1,4'-bis-phosphate (lipid IVA). This chain is Tetraacyldisaccharide 4'-kinase, found in Escherichia coli (strain SMS-3-5 / SECEC).